The primary structure comprises 119 residues: Acidic phospholipase A2 DE-II (119 aa).

Cystine bridges form between C11–C72, C26–C118, C28–C44, C43–C99, C50–C92, C60–C85, and C79–C90. Ca(2+)-binding residues include Y27, G29, and G31. Residue H47 is part of the active site. D48 contributes to the Ca(2+) binding site. D93 is a catalytic residue.

The protein belongs to the phospholipase A2 family. Group I subfamily. D49 sub-subfamily. The cofactor is Ca(2+). In terms of tissue distribution, expressed by the venom gland.

It localises to the secreted. The catalysed reaction is a 1,2-diacyl-sn-glycero-3-phosphocholine + H2O = a 1-acyl-sn-glycero-3-phosphocholine + a fatty acid + H(+). In terms of biological role, PLA2 catalyzes the calcium-dependent hydrolysis of the 2-acyl groups in 3-sn-phosphoglycerides. This is Acidic phospholipase A2 DE-II from Naja melanoleuca (Forest cobra).